The primary structure comprises 164 residues: ATP synthase subunit b (164 aa).

Residues 10–30 form a helical membrane-spanning segment; sequence LLISQIVNFCLLAFLLNTFLY.

Belongs to the ATPase B chain family. F-type ATPases have 2 components, F(1) - the catalytic core - and F(0) - the membrane proton channel. F(1) has five subunits: alpha(3), beta(3), gamma(1), delta(1), epsilon(1). F(0) has three main subunits: a(1), b(2) and c(10-14). The alpha and beta chains form an alternating ring which encloses part of the gamma chain. F(1) is attached to F(0) by a central stalk formed by the gamma and epsilon chains, while a peripheral stalk is formed by the delta and b chains.

The protein localises to the cell membrane. Its function is as follows. F(1)F(0) ATP synthase produces ATP from ADP in the presence of a proton or sodium gradient. F-type ATPases consist of two structural domains, F(1) containing the extramembraneous catalytic core and F(0) containing the membrane proton channel, linked together by a central stalk and a peripheral stalk. During catalysis, ATP synthesis in the catalytic domain of F(1) is coupled via a rotary mechanism of the central stalk subunits to proton translocation. In terms of biological role, component of the F(0) channel, it forms part of the peripheral stalk, linking F(1) to F(0). The protein is ATP synthase subunit b of Herpetosiphon aurantiacus (strain ATCC 23779 / DSM 785 / 114-95).